Consider the following 265-residue polypeptide: MALAYDPLFITSDKSLSAFDVASSPPQPMNLTQDELKRIAAYKAVEFVESGMVLGLGTGSTAKHAVDRIGELLRQGKLENIVGIPTSKKTQEQALSLGIPLSDLDAHPVIDLSIDGADEVDPFLNLVKGRGGSLLREKMIEGASKKFVVIVDDSKMVKHIGGSKLALPVEIVPFCWKFTAEKLRSLLEGYGCEANLRLGEKGKAFVTDNGNYIVDMHVEEDMGDLGAVSDAILRLPGVVEHGMFLDMASTVIIAGELGVKIKNKH.

Alanine 2 bears the N-acetylalanine mark. Serine 96 carries the post-translational modification Phosphoserine.

It belongs to the ribose 5-phosphate isomerase family.

It is found in the cytoplasm. It carries out the reaction aldehydo-D-ribose 5-phosphate = D-ribulose 5-phosphate. Its pathway is carbohydrate degradation; pentose phosphate pathway; D-ribose 5-phosphate from D-ribulose 5-phosphate (non-oxidative stage): step 1/1. Its function is as follows. Catalyzes the reversible conversion of ribose-5-phosphate to ribulose 5-phosphate. The chain is Probable ribose-5-phosphate isomerase 2 (RPI2) from Arabidopsis thaliana (Mouse-ear cress).